A 519-amino-acid chain; its full sequence is Protein tweety homolog 1 (519 aa).

Topologically, residues 1–42 are extracellular; the sequence is MTFASFLINFYSVIPRLNFKFHWTNDVFNLEWSSEYFQALAL. A helical transmembrane segment spans residues 43 to 63; the sequence is VACLGAAVSLLLLVTIIIVWI. Residues 64–82 lie on the Cytoplasmic side of the membrane; the sequence is CQACHKNETTGKTRRRVRR. Residues 83-103 form a helical membrane-spanning segment; the sequence is LSTVLFIISVLCFFMLGVCLF. Topologically, residues 104–217 are extracellular; sequence ANEHVNRGMS…VLSLYESERW (114 aa). 3 N-linked (GlcNAc...) asparagine glycosylation sites follow: Asn-142, Asn-163, and Asn-176. Residues 218 to 238 form a helical membrane-spanning segment; the sequence is AFLVILLSITMVVLFTGVVAF. Over 239–245 the chain is Cytoplasmic; that stretch reads CKQSKKG. A helical transmembrane segment spans residues 246-266; it reads AVVFSAIGFFIFVVVWLLISI. Residues 267-395 are Extracellular-facing; the sequence is SLPLTIALAD…GTCNQSVAGM (129 aa). Asn-328, Asn-341, Asn-348, and Asn-389 each carry an N-linked (GlcNAc...) asparagine glycan. A helical membrane pass occupies residues 396 to 416; that stretch reads SIYMLSILLLGVFLFILLIVV. The Cytoplasmic segment spans residues 417 to 519; it reads SKTWNLFSRL…YNNYEDRYNM (103 aa). The disordered stretch occupies residues 459-485; it reads YNPRTRDRTEPSTNTTSGTADEPNAPL.

The protein belongs to the tweety family.

It is found in the cell membrane. In terms of biological role, probable chloride channel. This chain is Protein tweety homolog 1 (ttyh-1), found in Caenorhabditis elegans.